A 185-amino-acid polypeptide reads, in one-letter code: MLEQAPDEVQEIIEQGGVVAYPTEAVYGLGCDPDNDEAITRLLALKKRPWQKGLILVASDYQQLLPYIDESRLTNEQLNKVFVKWPGPFTFIMPIKPGLSNLLCGSFNSLAVRVSSHPTIQAICQRLGKPLVSTSANHAGEPPAMSCEEIIAKFDGEIDALISGSLGAERKPSTIVDAISGKVLR.

The region spanning 3 to 185 (EQAPDEVQEI…VDAISGKVLR (183 aa)) is the YrdC-like domain.

This sequence belongs to the SUA5 family. TsaC subfamily.

The protein localises to the cytoplasm. It catalyses the reaction L-threonine + hydrogencarbonate + ATP = L-threonylcarbamoyladenylate + diphosphate + H2O. Its function is as follows. Required for the formation of a threonylcarbamoyl group on adenosine at position 37 (t(6)A37) in tRNAs that read codons beginning with adenine. Catalyzes the conversion of L-threonine, HCO(3)(-)/CO(2) and ATP to give threonylcarbamoyl-AMP (TC-AMP) as the acyladenylate intermediate, with the release of diphosphate. This chain is Threonylcarbamoyl-AMP synthase, found in Shewanella sediminis (strain HAW-EB3).